Here is a 326-residue protein sequence, read N- to C-terminus: Myeloid protein 1 (326 aa).

Positions 1–18 (MPALSLIALLSLVSTAFA) are cleaved as a signal peptide. 2 consecutive repeat copies span residues 28 to 162 (QQGR…SDPT) and 177 to 312 (QQDA…SDPT). 3 cysteine pairs are disulfide-bonded: Cys-37/Cys-74, Cys-48/Cys-53, and Cys-113/Cys-156. Positions 67, 71, and 152 each coordinate Zn(2+). Positions 307-326 (DRSDPTSNLERGKGESEMEV) are disordered.

It belongs to the LECT2/MIM-1 family. In terms of processing, substrate for arginine-specific ADP-ribosyltransferase.

Its subcellular location is the cytoplasmic granule. The sequence is that of Myeloid protein 1 (MIM1) from Gallus gallus (Chicken).